A 379-amino-acid chain; its full sequence is Queuine tRNA-ribosyltransferase (379 aa).

D96 (proton acceptor) is an active-site residue. Substrate-binding positions include 96 to 100 (DSGGF), D150, Q196, and G223. The RNA binding stretch occupies residues 254–260 (GIGTPDY). The active-site Nucleophile is the D273. The Zn(2+) site is built by C311, C313, C316, and H342.

It belongs to the queuine tRNA-ribosyltransferase family. Homodimer. Within each dimer, one monomer is responsible for RNA recognition and catalysis, while the other monomer binds to the replacement base PreQ1. It depends on Zn(2+) as a cofactor.

The catalysed reaction is 7-aminomethyl-7-carbaguanine + guanosine(34) in tRNA = 7-aminomethyl-7-carbaguanosine(34) in tRNA + guanine. It participates in tRNA modification; tRNA-queuosine biosynthesis. In terms of biological role, catalyzes the base-exchange of a guanine (G) residue with the queuine precursor 7-aminomethyl-7-deazaguanine (PreQ1) at position 34 (anticodon wobble position) in tRNAs with GU(N) anticodons (tRNA-Asp, -Asn, -His and -Tyr). Catalysis occurs through a double-displacement mechanism. The nucleophile active site attacks the C1' of nucleotide 34 to detach the guanine base from the RNA, forming a covalent enzyme-RNA intermediate. The proton acceptor active site deprotonates the incoming PreQ1, allowing a nucleophilic attack on the C1' of the ribose to form the product. After dissociation, two additional enzymatic reactions on the tRNA convert PreQ1 to queuine (Q), resulting in the hypermodified nucleoside queuosine (7-(((4,5-cis-dihydroxy-2-cyclopenten-1-yl)amino)methyl)-7-deazaguanosine). The chain is Queuine tRNA-ribosyltransferase from Treponema denticola (strain ATCC 35405 / DSM 14222 / CIP 103919 / JCM 8153 / KCTC 15104).